A 625-amino-acid polypeptide reads, in one-letter code: Cytochrome c oxidase subunit 1 (625 aa).

A helical membrane pass occupies residues 23-43; it reads IAIMYLIAGTLFFVKAGVMAL. His69 is a Fe(II)-heme a binding site. The next 6 membrane-spanning stretches (helical) occupy residues 72 to 92, 99 to 119, 151 to 171, 195 to 215, 240 to 260, and 272 to 292; these read IMLFLAATPLLFAFMNYVIPL, VAFPFVNALGFWIFFFGGLLL, FYVLGLQVSGIGTLISAINFL, FISSTLILFAFTPLAAGLALL, IFWIFGHPEVYILVLPAFGII, and LFGYTAMVFATMIIAFLGFMV. Positions 246 and 250 each coordinate Cu cation. A cross-link (1'-histidyl-3'-tyrosine (His-Tyr)) is located at residues 246–250; that stretch reads HPEVY. Cu cation-binding residues include His295 and His296. Transmembrane regions (helical) follow at residues 309–329 and 343–363; these read IFAVATMTIAVPTGIKIFNWL and MLFASSFVPTFVLGGVTGVML. His381 is a binding site for heme a3. 5 helical membrane passes run 382–402, 417–437, 460–480, 551–571, and 577–597; these read FHYIIVGGIVLSLFAGLFYWY, LFFWVFYIGFHLTFFVQHLLG, ISTIGTFFMSAGVILLVINVI, SILPFIMSIGLFFAGFGLIML, and IINPWIVAIGGLALTFGCMFV. His383 serves as a coordination point for Fe(II)-heme a.

The protein belongs to the heme-copper respiratory oxidase family.

It is found in the cell membrane. It carries out the reaction 4 Fe(II)-[cytochrome c] + O2 + 8 H(+)(in) = 4 Fe(III)-[cytochrome c] + 2 H2O + 4 H(+)(out). It functions in the pathway energy metabolism; oxidative phosphorylation. Functionally, cytochrome c oxidase is the component of the respiratory chain that catalyzes the reduction of oxygen to water. Subunits 1-3 form the functional core of the enzyme complex. CO I is the catalytic subunit of the enzyme. Electrons originating in cytochrome c are transferred via the copper A center of subunit 2 and heme A of subunit 1 to the bimetallic center formed by heme A3 and copper B. This is Cytochrome c oxidase subunit 1 (ctaD) from Alkalihalophilus pseudofirmus (strain ATCC BAA-2126 / JCM 17055 / OF4) (Bacillus pseudofirmus).